The sequence spans 213 residues: Adenylate kinase (213 aa).

10 to 15 (GSGKGT) contributes to the ATP binding site. The segment at 30–59 (STGDLFRTNIENDTPLGKEIKQIVENGQLV) is NMP. Residues T31, R36, 57–59 (QLV), 85–88 (GFPR), and Q92 each bind AMP. An LID region spans residues 121 to 158 (GRRICQSCCKIFNIYTLPTKEKEICDFCQGILYQRKDD). R122 serves as a coordination point for ATP. Residues C125 and C128 each coordinate Zn(2+). 131–132 (IF) is an ATP binding site. The Zn(2+) site is built by C145 and C148. AMP is bound by residues R155 and R166. K194 is an ATP binding site.

It belongs to the adenylate kinase family. Monomer.

It is found in the cytoplasm. It carries out the reaction AMP + ATP = 2 ADP. It functions in the pathway purine metabolism; AMP biosynthesis via salvage pathway; AMP from ADP: step 1/1. In terms of biological role, catalyzes the reversible transfer of the terminal phosphate group between ATP and AMP. Plays an important role in cellular energy homeostasis and in adenine nucleotide metabolism. This is Adenylate kinase from Borrelia duttonii (strain Ly).